The chain runs to 635 residues: Threonine--tRNA ligase (635 aa).

The region spanning 1 to 61 (MVSIRLPDGS…DRDASLAIVT (61 aa)) is the TGS domain. A catalytic region spans residues 242–533 (DHRKLGKQLD…LIEHHAGAMP (292 aa)). Zn(2+) is bound by residues cysteine 333, histidine 384, and histidine 510.

Belongs to the class-II aminoacyl-tRNA synthetase family. Homodimer. Zn(2+) is required as a cofactor.

The protein localises to the cytoplasm. The catalysed reaction is tRNA(Thr) + L-threonine + ATP = L-threonyl-tRNA(Thr) + AMP + diphosphate + H(+). Functionally, catalyzes the attachment of threonine to tRNA(Thr) in a two-step reaction: L-threonine is first activated by ATP to form Thr-AMP and then transferred to the acceptor end of tRNA(Thr). Also edits incorrectly charged L-seryl-tRNA(Thr). In Burkholderia vietnamiensis (strain G4 / LMG 22486) (Burkholderia cepacia (strain R1808)), this protein is Threonine--tRNA ligase.